A 599-amino-acid chain; its full sequence is Elongation factor 4 (599 aa).

The tr-type G domain maps to 2-185; that stretch reads ENIRNFSIIA…AITKRIPPPK (184 aa). GTP contacts are provided by residues 14–19 and 132–135; these read DHGKST and NKID.

Belongs to the TRAFAC class translation factor GTPase superfamily. Classic translation factor GTPase family. LepA subfamily.

It is found in the cell inner membrane. It carries out the reaction GTP + H2O = GDP + phosphate + H(+). Its function is as follows. Required for accurate and efficient protein synthesis under certain stress conditions. May act as a fidelity factor of the translation reaction, by catalyzing a one-codon backward translocation of tRNAs on improperly translocated ribosomes. Back-translocation proceeds from a post-translocation (POST) complex to a pre-translocation (PRE) complex, thus giving elongation factor G a second chance to translocate the tRNAs correctly. Binds to ribosomes in a GTP-dependent manner. This chain is Elongation factor 4, found in Hydrogenobaculum sp. (strain Y04AAS1).